The sequence spans 104 residues: Small ribosomal subunit protein uS10 (104 aa).

Belongs to the universal ribosomal protein uS10 family. In terms of assembly, part of the 30S ribosomal subunit.

In terms of biological role, involved in the binding of tRNA to the ribosomes. The sequence is that of Small ribosomal subunit protein uS10 from Variovorax paradoxus (strain S110).